The chain runs to 238 residues: Inactive glycoside hydrolase XLP1 (238 aa).

Positions 1–19 are cleaved as a signal peptide; that stretch reads MKSFLIAIVIAVLLPVSAA. The active site involves Glu133. Asn171 and Asn187 each carry an N-linked (GlcNAc...) asparagine glycan. Glu219 is a catalytic residue.

Belongs to the glycosyl hydrolase 12 (cellulase H) family. In terms of assembly, interacts with host apoplastic glucanase inhibitor GIP2.

It localises to the secreted. Functionally, non-functional secreted XEG1-like protein that binds to host Nicotiana benthamiana apoplastic glucanase inhibitor protein GIP2 more tightly than does XEG1, thus it outcompetes XEG1 for GIP2 binding and frees functional XEG1 to support P.parasitica infection. With XEG1, is required to elevate apoplastic sugar during P.parasitica infection. The polypeptide is Inactive glycoside hydrolase XLP1 (Phytophthora nicotianae (strain INRA-310) (Phytophthora parasitica)).